The primary structure comprises 584 residues: Arginine--tRNA ligase (584 aa).

Positions 126–136 match the 'HIGH' region motif; it reads PNIAKEMHVGH.

Belongs to the class-I aminoacyl-tRNA synthetase family. In terms of assembly, monomer.

It is found in the cytoplasm. It catalyses the reaction tRNA(Arg) + L-arginine + ATP = L-arginyl-tRNA(Arg) + AMP + diphosphate. In Nostoc punctiforme (strain ATCC 29133 / PCC 73102), this protein is Arginine--tRNA ligase.